A 488-amino-acid chain; its full sequence is Thiamine transporter 2 (488 aa).

Topologically, residues 1–8 (MDSSCRTP) are cytoplasmic. The chain crosses the membrane as a helical span at residues 9-29 (PSNSWVYPTVILCLFGFFSMF). Residues 30-54 (RPSEAFLIPFLSEPSKNLTSPEMTN) lie on the Extracellular side of the membrane. Residue Asn46 is glycosylated (N-linked (GlcNAc...) asparagine). A helical membrane pass occupies residues 55–75 (EILPVWTYSYLATLPPVFVLT). The Cytoplasmic portion of the chain corresponds to 76–82 (DYLRYKP). Residues 83 to 103 (VIMLHVVAFATSYLFLLFGQG) traverse the membrane as a helical segment. Residues 104 to 111 (VMLMQTAE) are Extracellular-facing. The chain crosses the membrane as a helical span at residues 112–132 (FFFGVVSATEIAYFAYIYSMV). Residues 133–145 (SPEHYQKVSSYCR) are Cytoplasmic-facing. The chain crosses the membrane as a helical span at residues 146–166 (SITLVAYTAGSVLAQLLVSLT). Residues 167–172 (NLPYSS) are Extracellular-facing. A helical membrane pass occupies residues 173–193 (LFYISLACVSVAFFFSLFLPM). Residues 194-276 (PKKSMFFHAK…YSSKHLVYWS (83 aa)) are Cytoplasmic-facing. Residues 277–297 (LWWAFATAGYNQILNYVQVLW) form a helical membrane-spanning segment. Residues 298–310 (EHKAPSQDSSIYN) lie on the Extracellular side of the membrane. The helical transmembrane segment at 311 to 331 (GAVEAIATFGGALASFSVGYL) threads the bilayer. Residues 332–335 (KVNW) lie on the Cytoplasmic side of the membrane. A helical transmembrane segment spans residues 336–356 (DLLGELGLAVFSAVIAGSLFL). Residues 357-369 (MNYSRSIWVCYAG) are Extracellular-facing. A glycan (N-linked (GlcNAc...) asparagine) is linked at Asn358. A helical membrane pass occupies residues 370–390 (YLLVKSSYSFLITIAVFQIAV). Topologically, residues 391–399 (NLSLERYAL) are cytoplasmic. Residues 400–420 (VFGIDTFIALVIQTIMTMIVV) traverse the membrane as a helical segment. At 421–428 (DQRGLQLP) the chain is on the extracellular side. Residues 429–449 (VTTQFLVYGSYFAVIAGVFLM) traverse the membrane as a helical segment. At 450–488 (RSIYILCSAKCRKEVQNLATTRSPNEPHPQEPSNVSTKF) the chain is on the cytoplasmic side. Positions 469–488 (TTRSPNEPHPQEPSNVSTKF) are disordered.

The protein belongs to the reduced folate carrier (RFC) transporter (TC 2.A.48) family. As to expression, high expression in kidney, brain, lung and small intestine. Detected in pancreatic acinar cells (at protein level). Also expressed strongly in pancreatic islet cells.

The protein resides in the membrane. It catalyses the reaction thiamine(out) + H(+)(in) = thiamine(in) + H(+)(out). High-affinity transporter for the intake of thiamine. Unlike the human ortholog, lacks H(+)-dependent pyridoxine transport activity due to an absence of seven critical amino-acids required for pyridoxine transport. This Mus musculus (Mouse) protein is Thiamine transporter 2 (Slc19a3).